A 286-amino-acid polypeptide reads, in one-letter code: Glycine--tRNA ligase alpha subunit (286 aa).

Belongs to the class-II aminoacyl-tRNA synthetase family. In terms of assembly, tetramer of two alpha and two beta subunits.

The protein localises to the cytoplasm. The enzyme catalyses tRNA(Gly) + glycine + ATP = glycyl-tRNA(Gly) + AMP + diphosphate. This is Glycine--tRNA ligase alpha subunit (glyQ) from Thermotoga maritima (strain ATCC 43589 / DSM 3109 / JCM 10099 / NBRC 100826 / MSB8).